A 47-amino-acid polypeptide reads, in one-letter code: Delta-actitoxin-Axm1e (47 aa).

Intrachain disulfides connect C4-C44, C6-C34, and C27-C45.

The protein belongs to the sea anemone sodium channel inhibitory toxin family. Type I subfamily.

Its subcellular location is the secreted. It is found in the nematocyst. In terms of biological role, binds specifically to voltage-gated sodium channels (Nav), thereby delaying their inactivation. This toxin is active on a variety of voltage-gated sodium channels (Nav1.1/SCN1A, Nav1.2/SCN2A, Nav1.3/SCN3A, Nav1.4/SCN4A, Nav1.5/SCN5A and Nav1.6/SCN8A). The polypeptide is Delta-actitoxin-Axm1e (Anthopleura xanthogrammica (Giant green sea anemone)).